The primary structure comprises 419 residues: Subtilisin-like protease 2 (419 aa).

A signal peptide spans Met-1–Gly-16. The propeptide occupies Asp-17–Ala-122. Positions Gln-36–Ala-122 constitute an Inhibitor I9 domain. Residues Arg-131–Lys-419 form the Peptidase S8 domain. Catalysis depends on charge relay system residues Asp-169 and His-201. 3 N-linked (GlcNAc...) asparagine glycosylation sites follow: Asn-248, Asn-261, and Asn-348. The active-site Charge relay system is Ser-357. N-linked (GlcNAc...) asparagine glycosylation is present at Asn-388.

It belongs to the peptidase S8 family.

Its subcellular location is the secreted. In terms of biological role, secreted subtilisin-like serine protease with keratinolytic activity that contributes to pathogenicity. The polypeptide is Subtilisin-like protease 2 (SUB2) (Trichophyton verrucosum (Cattle ringworm fungus)).